We begin with the raw amino-acid sequence, 512 residues long: D-alanine--D-alanyl carrier protein ligase (512 aa).

Residue 152 to 153 (TS) coordinates ATP. D199 contributes to the D-alanine binding site. 294-299 (NAYGPT) provides a ligand contact to ATP. V303 contacts D-alanine. Residues D385, 397 to 400 (YGGR), and K499 contribute to the ATP site. K499 is a binding site for D-alanine.

Belongs to the ATP-dependent AMP-binding enzyme family. DltA subfamily.

Its subcellular location is the cytoplasm. The catalysed reaction is holo-[D-alanyl-carrier protein] + D-alanine + ATP = D-alanyl-[D-alanyl-carrier protein] + AMP + diphosphate. The protein operates within cell wall biogenesis; lipoteichoic acid biosynthesis. Its function is as follows. Catalyzes the first step in the D-alanylation of lipoteichoic acid (LTA), the activation of D-alanine and its transfer onto the D-alanyl carrier protein (Dcp) DltC. In an ATP-dependent two-step reaction, forms a high energy D-alanyl-AMP intermediate, followed by transfer of the D-alanyl residue as a thiol ester to the phosphopantheinyl prosthetic group of the Dcp. D-alanylation of LTA plays an important role in modulating the properties of the cell wall in Gram-positive bacteria, influencing the net charge of the cell wall. In Streptococcus pyogenes serotype M4 (strain MGAS10750), this protein is D-alanine--D-alanyl carrier protein ligase.